We begin with the raw amino-acid sequence, 204 residues long: tRNA (pseudouridine(54)-N(1))-methyltransferase (204 aa).

S-adenosyl-L-methionine is bound by residues Leu-136 and Gly-158.

It belongs to the methyltransferase superfamily. TrmY family. Homodimer.

The protein localises to the cytoplasm. The catalysed reaction is pseudouridine(54) in tRNA + S-adenosyl-L-methionine = N(1)-methylpseudouridine(54) in tRNA + S-adenosyl-L-homocysteine + H(+). In terms of biological role, specifically catalyzes the N1-methylation of pseudouridine at position 54 (Psi54) in tRNAs. In Pyrococcus abyssi (strain GE5 / Orsay), this protein is tRNA (pseudouridine(54)-N(1))-methyltransferase.